The chain runs to 595 residues: Alpha-1,3-galactosidase B (595 aa).

A signal peptide spans 1-22 (MKTILLFALSLLLSLSVSDVCA). PbH1 repeat units follow at residues 432–454 (TPEV…LFST), 455–477 (PKKT…LLCG), and 488–541 (CRDV…VIED).

This sequence belongs to the glycosyl hydrolase 110 family. B subfamily.

The catalysed reaction is Hydrolysis of terminal, non-reducing branched (1-&gt;3)-alpha-D-galactosidic residues, producing free D-galactose.. It catalyses the reaction Hydrolysis of terminal, non-reducing linear (1-&gt;3)-alpha-D-galactosidic residues, producing free D-galactose.. The enzyme catalyses Hydrolysis of terminal, non-reducing alpha-D-galactose residues in alpha-D-galactosides, including galactose oligosaccharides, galactomannans and galactolipids.. Its function is as follows. Alpha-galactosidase. Removes both branched alpha-1,3-linked galactose residues of blood group B antigens and linear alpha-1,3-linked galactose structures. The sequence is that of Alpha-1,3-galactosidase B (glaB) from Bacteroides fragilis (strain ATCC 25285 / DSM 2151 / CCUG 4856 / JCM 11019 / LMG 10263 / NCTC 9343 / Onslow / VPI 2553 / EN-2).